A 238-amino-acid polypeptide reads, in one-letter code: Probable transcriptional regulatory protein CHU_3516 (238 aa).

Belongs to the TACO1 family.

The protein resides in the cytoplasm. The protein is Probable transcriptional regulatory protein CHU_3516 of Cytophaga hutchinsonii (strain ATCC 33406 / DSM 1761 / CIP 103989 / NBRC 15051 / NCIMB 9469 / D465).